Reading from the N-terminus, the 300-residue chain is L-threonine kinase (300 aa).

92 to 102 (PVAKGMASSTA) contributes to the ATP binding site.

The protein belongs to the GHMP kinase family. PduX subfamily.

The protein localises to the cytoplasm. The enzyme catalyses L-threonine + ATP = O-phospho-L-threonine + ADP + H(+). The protein operates within cofactor biosynthesis; adenosylcobalamin biosynthesis. It functions in the pathway polyol metabolism; 1,2-propanediol degradation. L-threonine kinase that catalyzes the conversion of L-threonine to L-threonine-O-3-phosphate. Involved in the de novo synthesis of adenosylcobalamin (coenzyme B12) and the assimilation of cobyric acid. Uses ATP; the activity with CTP, GTP or UTP is 6, 11, and 3% of the activity with ATP, respectively. Its function is as follows. The 1,2-propanediol (1,2-PD)-specific bacterial microcompartment (BMC) concentrates low levels of 1,2-PD catabolic enzymes, concentrates volatile reaction intermediates thus enhancing pathway flux and keeps the level of toxic, mutagenic propionaldehyde low. This gene probably benefits from its induction via the Pdu promoter, rather than a physical interaction with the BMC. The chain is L-threonine kinase from Salmonella typhimurium (strain LT2 / SGSC1412 / ATCC 700720).